Consider the following 38-residue polypeptide: Cytochrome b6-f complex subunit 5 (38 aa).

The chain crosses the membrane as a helical span at residues Leu-5 to Ala-25.

It belongs to the PetG family. The 4 large subunits of the cytochrome b6-f complex are cytochrome b6, subunit IV (17 kDa polypeptide, PetD), cytochrome f and the Rieske protein, while the 4 small subunits are PetG, PetL, PetM and PetN. The complex functions as a dimer.

It localises to the cellular thylakoid membrane. Its function is as follows. Component of the cytochrome b6-f complex, which mediates electron transfer between photosystem II (PSII) and photosystem I (PSI), cyclic electron flow around PSI, and state transitions. PetG is required for either the stability or assembly of the cytochrome b6-f complex. The protein is Cytochrome b6-f complex subunit 5 of Microcystis aeruginosa (strain NIES-843 / IAM M-2473).